Reading from the N-terminus, the 467-residue chain is Membrane-bound acylglycerophosphatidylinositol O-acyltransferase mboat7 (467 aa).

At 1-5 (MSPDE) the chain is on the cytoplasmic side. A helical membrane pass occupies residues 6–22 (LVYLGILAATIPVGFLF). Residues 23–33 (RYLSPPVKQGA) are Lumenal-facing. A helical membrane pass occupies residues 34-57 (ALLLGLIISIATCGIHTLHSLCTV). Residues 58-73 (LGTWIIIKINWRSAPA) are Cytoplasmic-facing. The helical transmembrane segment at 74 to 93 (LSLAWTFLYLLFFRLVTWFG) threads the bilayer. Residues 94–193 (LPQPTPFANA…LPGKEPCLQR (100 aa)) lie on the Lumenal side of the membrane. The chain crosses the membrane as a helical span at residues 194–211 (LKMVPVYGLLFIAVNSVF). Over 212–230 (PLSYVRTEDFLEHNYFYRF) the chain is Cytoplasmic. The helical transmembrane segment at 231–260 (FYMVAIFFVFRMRFYSAWCGAEAGCISAGL) threads the bilayer. Residues 261–421 (GCYPQGALSK…LKASDTISYW (161 aa)) lie on the Lumenal side of the membrane. The N-linked (GlcNAc...) asparagine glycan is linked to N316. Residues 422-442 (SSIYFVIHIIAIVCIAVGQFM) form a helical membrane-spanning segment. At 443 to 467 (KGGRKREKRERGEGEKEDAVREKAE) the chain is on the cytoplasmic side. Residues 447-467 (KREKRERGEGEKEDAVREKAE) are disordered. A compositionally biased stretch (basic and acidic residues) spans 451–467 (RERGEGEKEDAVREKAE).

Belongs to the membrane-bound acyltransferase family.

The protein resides in the endoplasmic reticulum membrane. It catalyses the reaction a 1-acyl-sn-glycero-3-phospho-(1D-myo-inositol) + (5Z,8Z,11Z,14Z)-eicosatetraenoyl-CoA = a 1-acyl-2-(5Z,8Z,11Z,14Z-eicosatetraenoyl)-sn-glycero-3-phospho-(1D-myo-inositol) + CoA. The enzyme catalyses (5Z,8Z,11Z,14Z)-eicosatetraenoyl-CoA + 1-hexadecanoyl-sn-glycero-3-phosphocholine = 1-hexadecanoyl-2-(5Z,8Z,11Z,14Z-eicosatetraenoyl)-sn-glycero-3-phosphocholine + CoA. It carries out the reaction a 1-acyl-sn-glycero-3-phospho-(1D-myo-inositol) + an acyl-CoA = a 1,2-diacyl-sn-glycero-3-phospho-(1D-myo-inositol) + CoA. The catalysed reaction is 1-octadecanoyl-sn-glycero-3-phospho-(1D-myo-inositol) + (5Z,8Z,11Z,14Z)-eicosatetraenoyl-CoA = 1-octadecanoyl-2-(5Z,8Z,11Z,14Z-eicosatetraenoyl)-sn-glycero-3-phospho-(1D-myo-inositol) + CoA. It participates in lipid metabolism; phospholipid metabolism. In terms of biological role, acyltransferase which catalyzes the transfer of an acyl group from an acyl-CoA to a lysophosphatidylinositol (1-acylglycerophosphatidylinositol or LPI) leading to the production of a phosphatidylinositol (1,2-diacyl-sn-glycero-3-phosphoinositol or PI) and participates in the reacylation step of the phospholipid remodeling pathway also known as the Lands cycle. Prefers arachidonoyl-CoA as the acyl donor, thus contributing to the regulation of free levels arachidonic acid in cell. This is Membrane-bound acylglycerophosphatidylinositol O-acyltransferase mboat7 (mboat7) from Danio rerio (Zebrafish).